We begin with the raw amino-acid sequence, 628 residues long: tRNA uridine 5-carboxymethylaminomethyl modification enzyme MnmG (628 aa).

FAD is bound by residues 11-16 (GAGHAG), valine 123, and serine 178. NAD(+) is bound at residue 271-285 (GPRYCPSIETKIVTF). Glutamine 368 is an FAD binding site.

The protein belongs to the MnmG family. Homodimer. Heterotetramer of two MnmE and two MnmG subunits. FAD serves as cofactor.

The protein resides in the cytoplasm. In terms of biological role, NAD-binding protein involved in the addition of a carboxymethylaminomethyl (cmnm) group at the wobble position (U34) of certain tRNAs, forming tRNA-cmnm(5)s(2)U34. The protein is tRNA uridine 5-carboxymethylaminomethyl modification enzyme MnmG of Bacteroides thetaiotaomicron (strain ATCC 29148 / DSM 2079 / JCM 5827 / CCUG 10774 / NCTC 10582 / VPI-5482 / E50).